The following is a 139-amino-acid chain: Protein archease (139 aa).

Positions 12, 138, and 139 each coordinate Ca(2+).

This sequence belongs to the archease family.

Its function is as follows. Activates the tRNA-splicing ligase complex by facilitating the enzymatic turnover of catalytic subunit RtcB. Acts by promoting the guanylylation of RtcB, a key intermediate step in tRNA ligation. Can also alter the NTP specificity of RtcB such that ATP, dGTP or ITP is used efficiently. This chain is Protein archease, found in Saccharolobus islandicus (strain Y.G.57.14 / Yellowstone #1) (Sulfolobus islandicus).